The primary structure comprises 149 residues: uncharacterized protein (149 aa).

A Phosphoserine modification is found at serine 21. Helical transmembrane passes span 48 to 68 (FMEF…WVLG) and 72 to 92 (VLAA…FQLV). The disordered stretch occupies residues 116-149 (AEEVPPPSYPSLEEENEGNEEIEESEEMNTLLSK). The span at 127 to 142 (LEEENEGNEEIEESEE) shows a compositional bias: acidic residues.

The protein localises to the membrane. This is an uncharacterized protein from Schizosaccharomyces pombe (strain 972 / ATCC 24843) (Fission yeast).